Reading from the N-terminus, the 871-residue chain is Coatomer subunit gamma-2 (871 aa).

Basic and acidic residues predominate over residues 1-11 (MIKKFDKKDEE). The tract at residues 1–20 (MIKKFDKKDEESGSGSNPFR) is disordered. HEAT repeat units follow at residues 64 to 101 (TEAT…ISED), 283 to 320 (RELA…KHPS), 321 to 355 (AVTA…GSES), 356 to 392 (SVDR…KYPR), 395 to 430 (SVMM…ENPE), and 467 to 504 (PVPS…QNEN). Threonine 594 bears the Phosphothreonine mark.

The protein belongs to the COPG family. As to quaternary structure, oligomeric complex. Binds to CDC42. Interacts with JAGN1. Interacts with TMED10 (via cytoplasmic domain).

It is found in the cytoplasm. It localises to the cytosol. Its subcellular location is the golgi apparatus membrane. The protein localises to the cytoplasmic vesicle. The protein resides in the COPI-coated vesicle membrane. In terms of biological role, the coatomer is a cytosolic protein complex that binds to dilysine motifs and reversibly associates with Golgi non-clathrin-coated vesicles, which further mediate biosynthetic protein transport from the ER, via the Golgi up to the trans Golgi network. Coatomer complex is required for budding from Golgi membranes, and is essential for the retrograde Golgi-to-ER transport of dilysine-tagged proteins. In mammals, the coatomer can only be recruited by membranes associated to ADP-ribosylation factors (ARFs), which are small GTP-binding proteins; the complex also influences the Golgi structural integrity, as well as the processing, activity, and endocytic recycling of LDL receptors. This Bos taurus (Bovine) protein is Coatomer subunit gamma-2 (COPG2).